The following is a 471-amino-acid chain: Citrate synthase, mitochondrial (471 aa).

A mitochondrion-targeting transit peptide spans 1–18 (MASLRSATALSRLRSRAG). Residues H307, H353, and D408 contribute to the active site.

This sequence belongs to the citrate synthase family. In terms of assembly, homodimer.

It localises to the mitochondrion matrix. It carries out the reaction oxaloacetate + acetyl-CoA + H2O = citrate + CoA + H(+). Its pathway is carbohydrate metabolism; tricarboxylic acid cycle; isocitrate from oxaloacetate: step 1/2. This Citrus maxima (Pomelo) protein is Citrate synthase, mitochondrial (CIT).